The following is an 832-amino-acid chain: Protein P (832 aa).

The terminal protein domain (TP) stretch occupies residues 1-177 (MPLSYQHFRR…FCGSPYSWEQ (177 aa)). Residues 178 to 335 (ELQHGAESFH…YCLSHIVNLL (158 aa)) are spacer. Residues 186 to 229 (FHQQSSGILSRPPVGSSLQSKHSKSRLGLQSQQGHLARRQQGRS) are disordered. The interval 336–679 (EDWGPCAEHG…YLNLYPVARQ (344 aa)) is polymerase/reverse transcriptase domain (RT). A Reverse transcriptase domain is found at 346–589 (EHHIRTPRTP…YSLNFMGYVI (244 aa)). Positions 418, 540, and 541 each coordinate Mg(2+).

This sequence belongs to the hepadnaviridae P protein family.

The catalysed reaction is DNA(n) + a 2'-deoxyribonucleoside 5'-triphosphate = DNA(n+1) + diphosphate. It carries out the reaction Endonucleolytic cleavage to 5'-phosphomonoester.. With respect to regulation, activated by host HSP70 and HSP40 in vitro to be able to bind the epsilon loop of the pgRNA. Because deletion of the RNase H region renders the protein partly chaperone-independent, the chaperones may be needed indirectly to relieve occlusion of the RNA-binding site by this domain. Inhibited by several reverse-transcriptase inhibitors: Lamivudine, Adefovir and Entecavir. Multifunctional enzyme that converts the viral RNA genome into dsDNA in viral cytoplasmic capsids. This enzyme displays a DNA polymerase activity that can copy either DNA or RNA templates, and a ribonuclease H (RNase H) activity that cleaves the RNA strand of RNA-DNA heteroduplexes in a partially processive 3'- to 5'-endonucleasic mode. Neo-synthesized pregenomic RNA (pgRNA) are encapsidated together with the P protein, and reverse-transcribed inside the nucleocapsid. Initiation of reverse-transcription occurs first by binding the epsilon loop on the pgRNA genome, and is initiated by protein priming, thereby the 5'-end of (-)DNA is covalently linked to P protein. Partial (+)DNA is synthesized from the (-)DNA template and generates the relaxed circular DNA (RC-DNA) genome. After budding and infection, the RC-DNA migrates in the nucleus, and is converted into a plasmid-like covalently closed circular DNA (cccDNA). The activity of P protein does not seem to be necessary for cccDNA generation, and is presumably released from (+)DNA by host nuclear DNA repair machinery. The protein is Protein P of Hepatitis B virus genotype D (isolate Germany/1-91/1991) (HBV-D).